Here is a 67-residue protein sequence, read N- to C-terminus: Bowman-Birk type proteinase inhibitor 1 (67 aa).

Intrachain disulfides connect C5/C59, C6/C21, C9/C55, C11/C19, C29/C36, C33/C48, and C38/C46.

The protein belongs to the Bowman-Birk serine protease inhibitor family. As to quaternary structure, monomer. Although dimerization may occur in solution. Seed.

Functionally, inhibits trypsin but not chymotrypsin. The inhibitor consists of 2 domains and has 2 sites of interaction with trypsin. The polypeptide is Bowman-Birk type proteinase inhibitor 1 (Dioclea glabra).